We begin with the raw amino-acid sequence, 536 residues long: Chlorophyllide a oxygenase, chloroplastic (536 aa).

Residues 1 to 36 (MNAAVFSPSALSLPISFSKTRSSFLSRKKGVKGEFR) constitute a chloroplast transit peptide. Positions 123–150 (IGTVKKELAGLQEELSKAHQQVHISEAR) form a coiled coil. The region spanning 221 to 321 (WYPVAFTADL…CLEQEGMIWI (101 aa)) is the Rieske domain. Residues cysteine 262, histidine 264, cysteine 281, and histidine 284 each contribute to the [2Fe-2S] cluster site. 4 residues coordinate Fe cation: aspartate 360, aspartate 364, histidine 367, and histidine 372.

The protein resides in the plastid. The protein localises to the chloroplast membrane. Its subcellular location is the chloroplast thylakoid membrane. The enzyme catalyses chlorophyllide a + 2 NADPH + 2 O2 + 2 H(+) = chlorophyllide b + 2 NADP(+) + 3 H2O. It functions in the pathway porphyrin-containing compound metabolism; chlorophyll biosynthesis. Functionally, catalyzes a two-step oxygenase reaction involved in the synthesis of chlorophyll b. Acts specifically on the non-esterified chlorophyllide a and not on chlorophyll a. The protein is Chlorophyllide a oxygenase, chloroplastic (CAO) of Arabidopsis thaliana (Mouse-ear cress).